Reading from the N-terminus, the 720-residue chain is Pollen receptor-like kinase 1 (720 aa).

One copy of the LRR 1; degenerate repeat lies at Leu-40–Val-64. The stretch at Leu-123–Ile-146 is one LRR 2; degenerate repeat. LRR repeat units lie at residues Leu-154–Pro-179, Leu-226–Pro-248, and Asn-249–Asp-273. A disordered region spans residues Leu-288–Ile-319. Positions Ala-291–Asp-317 are enriched in polar residues. The chain crosses the membrane as a helical span at residues Met-330 to Ile-350. Polar residues-rich tracts occupy residues Ser-356–Ala-382 and Leu-389–Lys-405. A disordered region spans residues Ser-356–Pro-409. The Protein kinase domain occupies Arg-434 to Leu-702. Residues Leu-440 to Ser-448 and Lys-462 each bind ATP.

Belongs to the protein kinase superfamily. Interacts with KIP1. Autophosphorylated. As to expression, expressed in mature pollen grains and pollen tubes, but not in style, petal, leaf, root or sepal. Very low expression in the ovary.

The protein localises to the microsome membrane. The protein resides in the cytoplasm. The catalysed reaction is L-seryl-[protein] + ATP = O-phospho-L-seryl-[protein] + ADP + H(+). It carries out the reaction L-threonyl-[protein] + ATP = O-phospho-L-threonyl-[protein] + ADP + H(+). The enzyme catalyses L-tyrosyl-[protein] + ATP = O-phospho-L-tyrosyl-[protein] + ADP + H(+). Its function is as follows. Dual-specificity kinase with both serine/threonine and tyrosine kinase activities. Required for postmeiotic development of microspores. Involved in embryo sac development at the late stages of megagametogenesis. Involved in the phosphorylation of KIP1. The protein is Pollen receptor-like kinase 1 of Petunia integrifolia (Violet-flowered petunia).